A 159-amino-acid chain; its full sequence is Cytochrome b6-f complex subunit 4 (159 aa).

The next 3 helical transmembrane spans lie at 35-55 (ILIF…LAVL), 93-113 (LLGV…PFIE), and 127-147 (ATAV…GAMI).

It belongs to the cytochrome b family. PetD subfamily. As to quaternary structure, the 4 large subunits of the cytochrome b6-f complex are cytochrome b6, subunit IV (17 kDa polypeptide, PetD), cytochrome f and the Rieske protein, while the 4 small subunits are PetG, PetL, PetM and PetN. The complex functions as a dimer.

The protein localises to the cell inner membrane. In terms of biological role, component of the cytochrome b6-f complex, which mediates electron transfer between photosystem II (PSII) and photosystem I (PSI), cyclic electron flow around PSI, and state transitions. The sequence is that of Cytochrome b6-f complex subunit 4 from Gloeobacter violaceus (strain ATCC 29082 / PCC 7421).